The following is a 370-amino-acid chain: Galanin receptor type 3 (370 aa).

At 1–20 (MADIQNISLDSPGSVGAVAV) the chain is on the extracellular side. Asn-6 is a glycosylation site (N-linked (GlcNAc...) asparagine). Residues 21–41 (PVVFALIFLLGMVGNGLVLAV) traverse the membrane as a helical segment. Topologically, residues 42–57 (LLQPGPSAWQEPGSTT) are cytoplasmic. A helical membrane pass occupies residues 58-78 (DLFILNLAVADLCFILCCVPF). Over 79 to 96 (QAAIYTLDAWLFGAFVCK) the chain is Extracellular. An intrachain disulfide couples Cys-95 to Cys-172. The helical transmembrane segment at 97–118 (TVHLLIYLTMYASSFTLAAVSV) threads the bilayer. At 119–138 (DRYLAVRHPLRSRALRTPRN) the chain is on the cytoplasmic side. Residues 139-159 (ARAAVGLVWLLAALFSAPYLS) traverse the membrane as a helical segment. The Extracellular portion of the chain corresponds to 160–184 (YYGTVRYGALELCVPAWEDARRRAL). The chain crosses the membrane as a helical span at residues 185 to 205 (DVATFAAGYLLPVTVVSLAYG). Residues 206–236 (RTLCFLWAAVGPAGAAAAEARRRATGRAGRA) lie on the Cytoplasmic side of the membrane. Residues 237-257 (MLTVAALYALCWGPHHALILC) form a helical membrane-spanning segment. Topologically, residues 258 to 259 (FW) are extracellular. The helical transmembrane segment at 260-280 (YGRFAFSPATYACRLASHCLA) threads the bilayer. The Cytoplasmic segment spans residues 281–370 (YANSCLNPLV…RLTLSARGPQ (90 aa)). The S-palmitoyl cysteine moiety is linked to residue Cys-308. Positions 328 to 370 (QPASSGPAGYPGDARPRGWSMEPRGDALRGGETRLTLSARGPQ) are disordered. The span at 350-359 (PRGDALRGGE) shows a compositional bias: basic and acidic residues.

The protein belongs to the G-protein coupled receptor 1 family.

The protein resides in the cell membrane. Functionally, receptor for the hormone galanin and spexin-1. In Mus musculus (Mouse), this protein is Galanin receptor type 3 (Galr3).